A 632-amino-acid chain; its full sequence is Extracellular metalloproteinase 2 (632 aa).

Positions M1 to G19 are cleaved as a signal peptide. Residues L20–S244 constitute a propeptide that is removed on maturation. The N-linked (GlcNAc...) asparagine glycan is linked to N270. H429 is a binding site for Zn(2+). The active site involves E430. A Zn(2+)-binding site is contributed by H433.

The protein belongs to the peptidase M36 family. Zn(2+) is required as a cofactor.

The protein localises to the secreted. Functionally, secreted metalloproteinase probably acting as a virulence factor. The protein is Extracellular metalloproteinase 2 (MEP2) of Trichophyton rubrum (Athlete's foot fungus).